Here is a 595-residue protein sequence, read N- to C-terminus: MVVCFLWLLLPYAATTLSASVPGCVPSGALLPRPTELSQSQNIKDATERLSRSLDDAVSGRIKAGWDIANTSFSVSIVSPNGGDPRTGVLWEYHHLAEKNINGTKHLDGDSQYLIGSVSKIFSDLLLLKSDVDLQDPITKYLPQLKNASSPIDWDNISLLSLSEHLSGIPANTIGALQFYFLEPLYRALGFPPLNKTDYPPCGIADLNKGCTPEELLTELVNSHPVSEPYERPVYSQLSFTLFSLALANDTGKDYAQMLEEQVIRPLNLRNTGVSPGEDKRAVIPNVEQQGWGADYGYNAPGGGLYSSLNDLSTLVTKILDYSILQNPQATKKWLQPRSATSSLNTLVGQPWEILRTSGMTPKYPHMIDIYGKSGGAPGYISQINVIDQYGVGVVLSTAGPLDSRAAYIINEAVLSAILPAVEDEARKQAGMYVGEYTSQKVDNEDATDYAPIKLKTVIDNGTGIKLESLSRNDSDILEGIRKVWSATLSTVGQLASEMRVYPTGLERLATNDKSLVEQDWRINFDLIPNFNEQASDLPGLGKLEALCTSWQTVDWLYYAGVPMDRIVFIVDKEAGRVVGVEIPFLRSGIIQKLN.

A signal peptide spans 1 to 18; sequence MVVCFLWLLLPYAATTLS. 2 N-linked (GlcNAc...) asparagine glycosylation sites follow: asparagine 70 and asparagine 102. Serine 117 functions as the Acyl-ester intermediate in the catalytic mechanism. Residues asparagine 147, asparagine 156, and asparagine 195 are each glycosylated (N-linked (GlcNAc...) asparagine). Tyrosine 235 acts as the Proton acceptor in catalysis. Residues asparagine 249, asparagine 461, and asparagine 473 are each glycosylated (N-linked (GlcNAc...) asparagine).

Belongs to the beta-lactamase family.

It is found in the secreted. It carries out the reaction a beta-lactam + H2O = a substituted beta-amino acid. This Arthroderma benhamiae (strain ATCC MYA-4681 / CBS 112371) (Trichophyton mentagrophytes) protein is Beta-lactamase-like protein ARB_00930.